A 425-amino-acid polypeptide reads, in one-letter code: Serine--tRNA ligase (425 aa).

L-serine is bound at residue 233-235 (TAE). 264–266 (RRE) lines the ATP pocket. L-serine is bound at residue glutamate 287. An ATP-binding site is contributed by 351–354 (EISS). Position 385 (serine 385) interacts with L-serine.

The protein belongs to the class-II aminoacyl-tRNA synthetase family. Type-1 seryl-tRNA synthetase subfamily. In terms of assembly, homodimer. The tRNA molecule binds across the dimer.

The protein resides in the cytoplasm. It catalyses the reaction tRNA(Ser) + L-serine + ATP = L-seryl-tRNA(Ser) + AMP + diphosphate + H(+). The catalysed reaction is tRNA(Sec) + L-serine + ATP = L-seryl-tRNA(Sec) + AMP + diphosphate + H(+). It functions in the pathway aminoacyl-tRNA biosynthesis; selenocysteinyl-tRNA(Sec) biosynthesis; L-seryl-tRNA(Sec) from L-serine and tRNA(Sec): step 1/1. Catalyzes the attachment of serine to tRNA(Ser). Is also able to aminoacylate tRNA(Sec) with serine, to form the misacylated tRNA L-seryl-tRNA(Sec), which will be further converted into selenocysteinyl-tRNA(Sec). This Parasynechococcus marenigrum (strain WH8102) protein is Serine--tRNA ligase.